We begin with the raw amino-acid sequence, 194 residues long: Mitochondrial import inner membrane translocase subunit Tim22 (194 aa).

2 disulfides stabilise this stretch: C69–C141 and C160–C179. The next 3 membrane-spanning stretches (helical) occupy residues 74–94 (VLAC…TAGI), 123–143 (MSYA…ECLV), and 170–190 (AGVK…AAID).

This sequence belongs to the Tim17/Tim22/Tim23 family. As to quaternary structure, component of the TIM22 complex, whose core is composed of TIMM22, associated with peripheral protein FXC1/TIMM10B and the 70 kDa heterohexamer. In most cases, the 70 kDa complex is composed of TIMM9 and TIMM10 (TIMM10A or TIMM10B). A small fraction of the 70 kDa complex is composed of TIMM8 (TIMM8A/DDP1 or TIMM8B/DDP2) and TIMM13. The TIM22 complex also contains AGK and TIMM29. Interacts directly with TIMM9, TIMM10A and FXC1/TIMM10B. Interacts (when oxidized) with TIMM29; interaction is direct. Post-translationally, disulfide bonds promote efficient assembly of the TIM22 complex.

The protein resides in the mitochondrion inner membrane. Essential core component of the TIM22 complex, a complex that mediates the import and insertion of multi-pass transmembrane proteins into the mitochondrial inner membrane. In the TIM22 complex, it constitutes the voltage-activated and signal-gated channel. Forms a twin-pore translocase that uses the membrane potential as external driving force in 2 voltage-dependent steps. This Mus musculus (Mouse) protein is Mitochondrial import inner membrane translocase subunit Tim22 (Timm22).